The following is a 129-amino-acid chain: Lysozyme C (129 aa).

One can recognise a C-type lysozyme domain in the interval 1–129 (KVYGRCELAA…VQAWIRGCRL (129 aa)). Intrachain disulfides connect Cys-6/Cys-127, Cys-30/Cys-115, Cys-64/Cys-80, and Cys-76/Cys-94. Active-site residues include Glu-35 and Asp-52.

The protein belongs to the glycosyl hydrolase 22 family. As to quaternary structure, monomer.

Its subcellular location is the secreted. The catalysed reaction is Hydrolysis of (1-&gt;4)-beta-linkages between N-acetylmuramic acid and N-acetyl-D-glucosamine residues in a peptidoglycan and between N-acetyl-D-glucosamine residues in chitodextrins.. Its function is as follows. Lysozymes have primarily a bacteriolytic function; those in tissues and body fluids are associated with the monocyte-macrophage system and enhance the activity of immunoagents. The protein is Lysozyme C (LYZ) of Tragopan satyra (Satyr tragopan).